Reading from the N-terminus, the 57-residue chain is UPF0391 membrane protein Arad_3976 (57 aa).

The next 2 helical transmembrane spans lie at 4 to 24 and 33 to 53; these read WAII…SGVS and VLFA…VMAG.

Belongs to the UPF0391 family.

It is found in the cell membrane. The sequence is that of UPF0391 membrane protein Arad_3976 from Rhizobium rhizogenes (strain K84 / ATCC BAA-868) (Agrobacterium radiobacter).